Here is a 640-residue protein sequence, read N- to C-terminus: Dextranase (640 aa).

An N-terminal signal peptide occupies residues 1-32 (MPGTGLGRLAKRMTAAAAVFFISTSAVLPAQA). A propeptide spanning residues 33–49 (ATAPAAAPPGVPAALKA) is cleaved from the precursor. Residues 248–269 (EQKERLVPTEESGSIHYPEPGE) are disordered.

The protein belongs to the glycosyl hydrolase 49 family.

It localises to the secreted. It carries out the reaction Endohydrolysis of (1-&gt;6)-alpha-D-glucosidic linkages in dextran.. Efficiently decomposes water-insoluble glucan as well as dextran. This chain is Dextranase, found in Arthrobacter sp. (strain CB-8).